A 211-amino-acid chain; its full sequence is Thiamine-phosphate synthase (211 aa).

4-amino-2-methyl-5-(diphosphooxymethyl)pyrimidine is bound by residues 37–41 (QLRIK) and Asn-69. 2 residues coordinate Mg(2+): Asp-70 and Asp-89. Ser-108 provides a ligand contact to 4-amino-2-methyl-5-(diphosphooxymethyl)pyrimidine. 134–136 (TQT) provides a ligand contact to 2-[(2R,5Z)-2-carboxy-4-methylthiazol-5(2H)-ylidene]ethyl phosphate. Lys-137 serves as a coordination point for 4-amino-2-methyl-5-(diphosphooxymethyl)pyrimidine. 2-[(2R,5Z)-2-carboxy-4-methylthiazol-5(2H)-ylidene]ethyl phosphate contacts are provided by residues Gly-166 and 186-187 (VS).

The protein belongs to the thiamine-phosphate synthase family. The cofactor is Mg(2+).

The enzyme catalyses 2-[(2R,5Z)-2-carboxy-4-methylthiazol-5(2H)-ylidene]ethyl phosphate + 4-amino-2-methyl-5-(diphosphooxymethyl)pyrimidine + 2 H(+) = thiamine phosphate + CO2 + diphosphate. The catalysed reaction is 2-(2-carboxy-4-methylthiazol-5-yl)ethyl phosphate + 4-amino-2-methyl-5-(diphosphooxymethyl)pyrimidine + 2 H(+) = thiamine phosphate + CO2 + diphosphate. It carries out the reaction 4-methyl-5-(2-phosphooxyethyl)-thiazole + 4-amino-2-methyl-5-(diphosphooxymethyl)pyrimidine + H(+) = thiamine phosphate + diphosphate. Its pathway is cofactor biosynthesis; thiamine diphosphate biosynthesis; thiamine phosphate from 4-amino-2-methyl-5-diphosphomethylpyrimidine and 4-methyl-5-(2-phosphoethyl)-thiazole: step 1/1. Condenses 4-methyl-5-(beta-hydroxyethyl)thiazole monophosphate (THZ-P) and 2-methyl-4-amino-5-hydroxymethyl pyrimidine pyrophosphate (HMP-PP) to form thiamine monophosphate (TMP). In Escherichia coli (strain SE11), this protein is Thiamine-phosphate synthase.